Reading from the N-terminus, the 405-residue chain is Acetate kinase (405 aa).

Asparagine 7 contributes to the Mg(2+) binding site. Lysine 14 is a binding site for ATP. Substrate is bound at residue arginine 90. Catalysis depends on aspartate 147, which acts as the Proton donor/acceptor. Residues 207–211, 282–284, and 331–335 contribute to the ATP site; these read HLGNG, DFR, and GVGEN. Mg(2+) is bound at residue glutamate 384.

This sequence belongs to the acetokinase family. Homodimer. Requires Mg(2+) as cofactor. Mn(2+) serves as cofactor.

It is found in the cytoplasm. It carries out the reaction acetate + ATP = acetyl phosphate + ADP. It functions in the pathway metabolic intermediate biosynthesis; acetyl-CoA biosynthesis; acetyl-CoA from acetate: step 1/2. In terms of biological role, catalyzes the formation of acetyl phosphate from acetate and ATP. Can also catalyze the reverse reaction. The protein is Acetate kinase of Clostridium kluyveri (strain ATCC 8527 / DSM 555 / NBRC 12016 / NCIMB 10680 / K1).